The following is a 376-amino-acid chain: Carbamoyl phosphate synthase small chain (376 aa).

Residues 1–187 (MRAFLALEDG…AADGAYAWPG (187 aa)) are CPSase. Serine 45, glycine 239, and glycine 241 together coordinate L-glutamine. The 186-residue stretch at 191–376 (RLVVYDYGIK…RGMVREAVGR (186 aa)) folds into the Glutamine amidotransferase type-1 domain. The active-site Nucleophile is cysteine 266. L-glutamine is bound by residues leucine 267, glutamine 270, asparagine 308, glycine 310, and phenylalanine 311. Active-site residues include histidine 349 and glutamate 351.

This sequence belongs to the CarA family. In terms of assembly, composed of two chains; the small (or glutamine) chain promotes the hydrolysis of glutamine to ammonia, which is used by the large (or ammonia) chain to synthesize carbamoyl phosphate. Tetramer of heterodimers (alpha,beta)4.

The catalysed reaction is hydrogencarbonate + L-glutamine + 2 ATP + H2O = carbamoyl phosphate + L-glutamate + 2 ADP + phosphate + 2 H(+). It catalyses the reaction L-glutamine + H2O = L-glutamate + NH4(+). It participates in amino-acid biosynthesis; L-arginine biosynthesis; carbamoyl phosphate from bicarbonate: step 1/1. The protein operates within pyrimidine metabolism; UMP biosynthesis via de novo pathway; (S)-dihydroorotate from bicarbonate: step 1/3. Its function is as follows. Small subunit of the glutamine-dependent carbamoyl phosphate synthetase (CPSase). CPSase catalyzes the formation of carbamoyl phosphate from the ammonia moiety of glutamine, carbonate, and phosphate donated by ATP, constituting the first step of 2 biosynthetic pathways, one leading to arginine and/or urea and the other to pyrimidine nucleotides. The small subunit (glutamine amidotransferase) binds and cleaves glutamine to supply the large subunit with the substrate ammonia. The chain is Carbamoyl phosphate synthase small chain from Nitratidesulfovibrio vulgaris (strain DSM 19637 / Miyazaki F) (Desulfovibrio vulgaris).